The chain runs to 262 residues: Transmembrane protein 106A (262 aa).

The chain crosses the membrane as a helical span at residues 95–115 (FVFLAVLICLVTSSFIVFFLF).

Belongs to the TMEM106 family. As to expression, expressed in renal cells (at protein level). Expressed in epithelial cells.

The protein resides in the cell membrane. Its function is as follows. Activates macrophages and polarizes them into M1-like macrophages through the activation of the MAPK and NF-kappaB signaling pathway. Upon activation, up-regulates the expression of CD80, CD86, CD69 and MHC II on macrophages, and induces the release of pro-inflammatory cytokines such as TNF, IL1B, IL6, CCL2 and nitric oxide. May play a role in inhibition of proliferation and migration. In Homo sapiens (Human), this protein is Transmembrane protein 106A (TMEM106A).